Here is a 391-residue protein sequence, read N- to C-terminus: S-adenosylmethionine synthase (391 aa).

An ATP-binding site is contributed by His-14. Asp-16 contacts Mg(2+). Glu-42 is a K(+) binding site. L-methionine-binding residues include Glu-55 and Gln-98. Residues 98–108 (QSVDIAMGVDE) are flexible loop. ATP contacts are provided by residues 172–174 (DGK), 238–239 (RF), Asp-247, 253–254 (RK), Ala-270, and Lys-274. Position 247 (Asp-247) interacts with L-methionine. Lys-278 is an L-methionine binding site.

It belongs to the AdoMet synthase family. Homotetramer; dimer of dimers. Requires Mg(2+) as cofactor. K(+) is required as a cofactor.

The protein resides in the cytoplasm. The catalysed reaction is L-methionine + ATP + H2O = S-adenosyl-L-methionine + phosphate + diphosphate. The protein operates within amino-acid biosynthesis; S-adenosyl-L-methionine biosynthesis; S-adenosyl-L-methionine from L-methionine: step 1/1. Its function is as follows. Catalyzes the formation of S-adenosylmethionine (AdoMet) from methionine and ATP. The overall synthetic reaction is composed of two sequential steps, AdoMet formation and the subsequent tripolyphosphate hydrolysis which occurs prior to release of AdoMet from the enzyme. The protein is S-adenosylmethionine synthase of Clostridium botulinum (strain Hall / ATCC 3502 / NCTC 13319 / Type A).